The chain runs to 571 residues: MADGSDLENNHKPELDRSQPGSTSNGSQEQKDPDEIAPEYATGVRLILVMFTIFVSTILVSLEIGIIATAIPGITNEFRRLDDVGWYGSATFILAAAASPLWGKLFKYVDVKWTYLSAVFIFLVGSIVAAAAPNSVSVIIGRAIQGWGASGVLGGTLIVINYVAPPRNHPLLIGTWMAVFMVSTILGPVIGGGFTSGVSWRWCFWINLPVGGPIIVLLLLFLRIPKHIKKVPATWQEIILALDLPGFCLLLVSLVCLTLALQWGGQTKAWNDGSVIATLVMWIVLSIAFLVTEWFQGQRAMTPFSILTLRMTWSNALFCLISYAALYQVMFYLPIYFQSIHGQSAVKSGVNTLPFLAFFALGAVVSGGVIGKTRYTQPFELLGALIMTAGMALIYILDVDSPQAMYIGAEVLFGFGVGICNQIPMTAVQGFSKQEDVSSATGIMVMCQTLSGAYFVAIAQSLFANRMLATVLSGAGHLDPALVLGTGASELQHVFSGEDLTEVIAAYMVGIKDVFAFSLACAAFAVLLSLIIPFKRLPDHGKKDKPATEEAAEEKSEAEGKVSGDKEENHS.

Positions 1–34 (MADGSDLENNHKPELDRSQPGSTSNGSQEQKDPD) are disordered. Residues 8–17 (ENNHKPELDR) are compositionally biased toward basic and acidic residues. Positions 19-28 (QPGSTSNGSQ) are enriched in polar residues. Asn25 carries an N-linked (GlcNAc...) asparagine glycan. 14 consecutive transmembrane segments (helical) span residues 47-67 (ILVMFTIFVSTILVSLEIGII), 86-106 (WYGSATFILAAAASPLWGKLF), 120-140 (FIFLVGSIVAAAAPNSVSVII), 143-163 (AIQGWGASGVLGGTLIVINYV), 171-191 (LLIGTWMAVFMVSTILGPVIG), 202-222 (WCFWINLPVGGPIIVLLLLFL), 238-258 (IILALDLPGFCLLLVSLVCLT), 275-295 (VIATLVMWIVLSIAFLVTEWF), 317-337 (LFCLISYAALYQVMFYLPIYF), 350-370 (VNTLPFLAFFALGAVVSGGVI), 379-399 (FELLGALIMTAGMALIYILDV), 405-425 (MYIGAEVLFGFGVGICNQIPM), 443-463 (IMVMCQTLSGAYFVAIAQSLF), and 514-534 (VFAFSLACAAFAVLLSLIIPF). Residues 538-571 (PDHGKKDKPATEEAAEEKSEAEGKVSGDKEENHS) form a disordered region.

Belongs to the major facilitator superfamily. TCR/Tet family.

The protein localises to the cell membrane. Efflux pump that is probably involved in the export of dehydrocurvularin. This is Dehydrocurvularin exporter from Aspergillus terreus.